The primary structure comprises 328 residues: tRNA(Ile)-lysidine synthase (328 aa).

An ATP-binding site is contributed by 35-40; it reads SGGADS.

It belongs to the tRNA(Ile)-lysidine synthase family.

Its subcellular location is the cytoplasm. It carries out the reaction cytidine(34) in tRNA(Ile2) + L-lysine + ATP = lysidine(34) in tRNA(Ile2) + AMP + diphosphate + H(+). Ligates lysine onto the cytidine present at position 34 of the AUA codon-specific tRNA(Ile) that contains the anticodon CAU, in an ATP-dependent manner. Cytidine is converted to lysidine, thus changing the amino acid specificity of the tRNA from methionine to isoleucine. The sequence is that of tRNA(Ile)-lysidine synthase from Polaromonas naphthalenivorans (strain CJ2).